A 286-amino-acid chain; its full sequence is Non-homologous end joining protein Ku (286 aa).

Positions 10–175 constitute a Ku domain; that stretch reads TVGLVSFPVR…EEVREPDFVV (166 aa). The segment covering 226-242 has biased composition (basic and acidic residues); that stretch reads ERQERQRREAGEVRQAD. The disordered stretch occupies residues 226–270; the sequence is ERQERQRREAGEVRQADETDEAAETEVPEVDIPASRAPGETGGEL. Residues 243-254 show a composition bias toward acidic residues; that stretch reads ETDEAAETEVPE.

This sequence belongs to the prokaryotic Ku family. Homodimer. Interacts with LigD.

Functionally, with LigD forms a non-homologous end joining (NHEJ) DNA repair enzyme, which repairs dsDNA breaks with reduced fidelity. Binds linear dsDNA with 5'- and 3'- overhangs but not closed circular dsDNA nor ssDNA. Recruits and stimulates the ligase activity of LigD. The sequence is that of Non-homologous end joining protein Ku from Actinosynnema mirum (strain ATCC 29888 / DSM 43827 / JCM 3225 / NBRC 14064 / NCIMB 13271 / NRRL B-12336 / IMRU 3971 / 101).